A 318-amino-acid chain; its full sequence is Phosphatidylglycerol--prolipoprotein diacylglyceryl transferase (318 aa).

Helical transmembrane passes span 24–44 (GPST…YLLP), 60–80 (LLLL…VFEI), and 115–135 (LFSG…LFIT). Arg164 lines the a 1,2-diacyl-sn-glycero-3-phospho-(1'-sn-glycerol) pocket. A run of 2 helical transmembrane segments spans residues 198-218 (VPVW…FFYF) and 285-305 (GFSQ…FFIL).

It belongs to the Lgt family.

The protein localises to the cell inner membrane. The enzyme catalyses L-cysteinyl-[prolipoprotein] + a 1,2-diacyl-sn-glycero-3-phospho-(1'-sn-glycerol) = an S-1,2-diacyl-sn-glyceryl-L-cysteinyl-[prolipoprotein] + sn-glycerol 1-phosphate + H(+). It functions in the pathway protein modification; lipoprotein biosynthesis (diacylglyceryl transfer). Its function is as follows. Catalyzes the transfer of the diacylglyceryl group from phosphatidylglycerol to the sulfhydryl group of the N-terminal cysteine of a prolipoprotein, the first step in the formation of mature lipoproteins. In Leptospira interrogans serogroup Icterohaemorrhagiae serovar copenhageni (strain Fiocruz L1-130), this protein is Phosphatidylglycerol--prolipoprotein diacylglyceryl transferase.